Consider the following 341-residue polypeptide: NADH-quinone oxidoreductase subunit H (341 aa).

Transmembrane regions (helical) follow at residues 38-58 (PSVVGPFGLLQPFADAIKLLV), 70-90 (ILFIMAPMLTFILALIVWAVI), 115-135 (IGVLYVLAISSLGIYGIIVAG), 161-181 (MGLIVATVVITTGTLNLGEMV), 187-207 (MPFWIDLLMMPIGVVFFISLL), 239-259 (LFFLGEYANMILGSAMMTIFF), 275-295 (IPGLIWFVLKIVLLLFIFVWT), and 314-334 (VFLPISVLWVILISGVLLFTG).

The protein belongs to the complex I subunit 1 family. NDH-1 is composed of 14 different subunits. Subunits NuoA, H, J, K, L, M, N constitute the membrane sector of the complex.

The protein resides in the cell membrane. The catalysed reaction is a quinone + NADH + 5 H(+)(in) = a quinol + NAD(+) + 4 H(+)(out). Functionally, NDH-1 shuttles electrons from NADH, via FMN and iron-sulfur (Fe-S) centers, to quinones in the respiratory chain. The immediate electron acceptor for the enzyme in this species is believed to be ubiquinone. Couples the redox reaction to proton translocation (for every two electrons transferred, four hydrogen ions are translocated across the cytoplasmic membrane), and thus conserves the redox energy in a proton gradient. This subunit may bind ubiquinone. This Wolbachia sp. subsp. Brugia malayi (strain TRS) protein is NADH-quinone oxidoreductase subunit H.